A 421-amino-acid polypeptide reads, in one-letter code: D-amino acid dehydrogenase (421 aa).

Valine 4–tryptophan 18 is a binding site for FAD.

The protein belongs to the DadA oxidoreductase family. The cofactor is FAD.

The catalysed reaction is a D-alpha-amino acid + A + H2O = a 2-oxocarboxylate + AH2 + NH4(+). It functions in the pathway amino-acid degradation; D-alanine degradation; NH(3) and pyruvate from D-alanine: step 1/1. Its function is as follows. Oxidative deamination of D-amino acids. This is D-amino acid dehydrogenase from Vibrio cholerae serotype O1 (strain ATCC 39541 / Classical Ogawa 395 / O395).